Reading from the N-terminus, the 136-residue chain is Small ribosomal subunit protein uS8 (136 aa).

It belongs to the universal ribosomal protein uS8 family. Part of the 30S ribosomal subunit. Contacts proteins S5 and S12.

In terms of biological role, one of the primary rRNA binding proteins, it binds directly to 16S rRNA central domain where it helps coordinate assembly of the platform of the 30S subunit. The protein is Small ribosomal subunit protein uS8 of Persephonella marina (strain DSM 14350 / EX-H1).